We begin with the raw amino-acid sequence, 642 residues long: Sodium- and chloride-dependent neutral and basic amino acid transporter B(0+) (642 aa).

At 1–44 (MDKLKCPSFFKCREKEKVSASSENFHVGENDENQDRGNWSKKSD) the chain is on the cytoplasmic side. 3 consecutive transmembrane segments (helical) span residues 45-65 (YLLS…FPYL), 72-92 (GAFL…LFFL), and 110-130 (ILPL…FVTI). Residues 131 to 234 (YYNVIIAYSL…RSSGMNETGV (104 aa)) are Extracellular-facing. Asn155, Asn163, Asn174, Asn189, Asn197, Asn202, and Asn230 each carry an N-linked (GlcNAc...) asparagine glycan. 2 consecutive transmembrane segments (helical) span residues 235–255 (IVWY…AALF) and 261–281 (SGKV…ILLV). The N-linked (GlcNAc...) asparagine glycan is linked to Asn302. 7 consecutive transmembrane segments (helical) span residues 315–335 (AATQ…ALSS), 348–368 (IVVC…IFSI), 399–419 (LAQL…LLTL), 450–477 (ITLG…VHLI), 480–500 (FCAG…IIWI), 528–548 (CWFV…LVQF), and 563–583 (VALG…MAII). At 584–642 (KIIQAKGNIFQRLISCCRPASNWGPYLEQHRGERYKDMVDPKKEADHEIPTVSGSRKPE) the chain is on the cytoplasmic side. Positions 622–632 (VDPKKEADHEI) are enriched in basic and acidic residues. The interval 622-642 (VDPKKEADHEIPTVSGSRKPE) is disordered.

The protein belongs to the sodium:neurotransmitter symporter (SNF) (TC 2.A.22) family. SLC6A14 subfamily. In terms of tissue distribution, levels are highest in adult and fetal lung, in trachea and salivary gland. Lower levels detected in mammary gland, stomach and pituitary gland, and very low levels in colon, uterus, prostate and testis.

It is found in the membrane. The protein resides in the apical cell membrane. It catalyses the reaction glycine(out) + chloride(out) + 2 Na(+)(out) = glycine(in) + chloride(in) + 2 Na(+)(in). The enzyme catalyses L-leucine(out) + chloride(out) + 2 Na(+)(out) = L-leucine(in) + chloride(in) + 2 Na(+)(in). The catalysed reaction is L-glutamine(out) + chloride(out) + 2 Na(+)(out) = L-glutamine(in) + chloride(in) + 2 Na(+)(in). It carries out the reaction L-arginine(out) + chloride(out) + 2 Na(+)(out) = L-arginine(in) + chloride(in) + 2 Na(+)(in). It catalyses the reaction (R)-carnitine(out) + chloride(out) + 2 Na(+)(out) = (R)-carnitine(in) + chloride(in) + 2 Na(+)(in). The enzyme catalyses O-butanoyl-(R)-carnitine(out) + chloride(out) + 2 Na(+)(out) = O-butanoyl-(R)-carnitine(in) + chloride(in) + 2 Na(+)(in). The catalysed reaction is O-propanoyl-(R)-carnitine(out) + chloride(out) + 2 Na(+)(out) = O-propanoyl-(R)-carnitine(in) + chloride(in) + 2 Na(+)(in). It carries out the reaction L-isoleucine(out) + chloride(out) + 2 Na(+)(out) = L-isoleucine(in) + chloride(in) + 2 Na(+)(in). It catalyses the reaction L-methionine(out) + chloride(out) + 2 Na(+)(out) = L-methionine(in) + chloride(in) + 2 Na(+)(in). The enzyme catalyses L-valine(out) + chloride(out) + 2 Na(+)(out) = L-valine(in) + chloride(in) + 2 Na(+)(in). The catalysed reaction is L-alanine(out) + chloride(out) + 2 Na(+)(out) = L-alanine(in) + chloride(in) + 2 Na(+)(in). It carries out the reaction L-serine(out) + chloride(out) + 2 Na(+)(out) = L-serine(in) + chloride(in) + 2 Na(+)(in). It catalyses the reaction L-cysteine(out) + chloride(out) + 2 Na(+)(out) = L-cysteine(in) + chloride(in) + 2 Na(+)(in). The enzyme catalyses L-asparagine(out) + chloride(out) + 2 Na(+)(out) = L-asparagine(in) + chloride(in) + 2 Na(+)(in). The catalysed reaction is L-threonine(out) + chloride(out) + 2 Na(+)(out) = L-threonine(in) + chloride(in) + 2 Na(+)(in). It carries out the reaction L-phenylalanine(out) + chloride(out) + 2 Na(+)(out) = L-phenylalanine(in) + chloride(in) + 2 Na(+)(in). It catalyses the reaction L-tryptophan(out) + chloride(out) + 2 Na(+)(out) = L-tryptophan(in) + chloride(in) + 2 Na(+)(in). The enzyme catalyses L-tyrosine(out) + chloride(out) + 2 Na(+)(out) = L-tyrosine(in) + chloride(in) + 2 Na(+)(in). The catalysed reaction is L-histidine(out) + chloride(out) + 2 Na(+)(out) = L-histidine(in) + chloride(in) + 2 Na(+)(in). It carries out the reaction L-lysine(out) + chloride(out) + 2 Na(+)(out) = L-lysine(in) + chloride(in) + 2 Na(+)(in). It catalyses the reaction beta-alanine(out) + chloride(out) + 2 Na(+)(out) = beta-alanine(in) + chloride(in) + 2 Na(+)(in). Amino acid transporter that plays an important role in the absorption of amino acids in the intestinal tract. Mediates the uptake of a broad range of neutral and cationic amino acids (with the exception of proline) in a Na(+)/Cl(-)-dependent manner. Transports non-alpha-amino acids such as beta-alanine with low affinity, and has a higher affinity for dipolar and cationic amino acids such as leucine and lysine. Can also transport carnitine, butirylcarnitine and propionylcarnitine coupled to the transmembrane gradients of Na(+) and Cl(-). The sequence is that of Sodium- and chloride-dependent neutral and basic amino acid transporter B(0+) from Homo sapiens (Human).